A 37-amino-acid chain; its full sequence is Large ribosomal subunit protein bL36c (37 aa).

Belongs to the bacterial ribosomal protein bL36 family.

The protein localises to the plastid. It localises to the chloroplast. In Cycas taitungensis (Prince sago), this protein is Large ribosomal subunit protein bL36c.